Reading from the N-terminus, the 615-residue chain is Protein DBF4 homolog B (615 aa).

The BRCT domain occupies 43-133 (ARKHPFSGKS…DPKGSHPRPS (91 aa)). Disordered stretches follow at residues 93–141 (REVK…DSVP) and 264–293 (FEAP…AHTM). Residues 275 to 284 (HTRESKDGEP) show a composition bias toward basic and acidic residues. A DBF4-type zinc finger spans residues 294–343 (PRRKKGYCECCQEAFEELHVHLQSAQHRSFALEAHLYAEVDRIIAQLSHS). Residues C301, C304, H314, and H320 each coordinate Zn(2+). The interval 371 to 407 (TLHPHQPSHPRAASPRIRKEDSCQASVTQGRAAGQQR) is disordered.

Forms a complex with CDC7. Note that CDC7 forms distinct complex either with DBF4/DBF4A or DBF4B. Such complexes are stable upon replication stress. Phosphorylated. As to expression, widely expressed. Highly expressed in testis.

It localises to the nucleus. Its function is as follows. Regulatory subunit for CDC7 which activates its kinase activity thereby playing a central role in DNA replication and cell proliferation. Required for progression of S and M phases. The complex CDC7-DBF4B selectively phosphorylates MCM2 subunit at 'Ser-40' and then is involved in regulating the initiation of DNA replication during cell cycle. The chain is Protein DBF4 homolog B (DBF4B) from Homo sapiens (Human).